The following is a 242-amino-acid chain: Transcriptional activator protein BjaR1 (242 aa).

An HTH luxR-type domain is found at 173–238 (TPYPSTRLTP…HAVALAIRHK (66 aa)). Residues 197–216 (AWEIGEILHITQRTAEEHLA) constitute a DNA-binding region (H-T-H motif).

This sequence belongs to the autoinducer-regulated transcriptional regulatory protein family.

Transcriptional activator that functions in response to the quorum-sensing autoinducer IV-HSL (isovaleryl-homoserine lactone). Activates BjaI expression. Is sensitive to IV-HSL at concentrations as low as 10 pM. The chain is Transcriptional activator protein BjaR1 (bjaR1) from Bradyrhizobium diazoefficiens (strain JCM 10833 / BCRC 13528 / IAM 13628 / NBRC 14792 / USDA 110).